The chain runs to 508 residues: Pyruvate kinase, cytosolic isozyme (508 aa).

R48 is a binding site for substrate. K(+)-binding residues include N50, S52, D82, and T83. 50–53 is an ATP binding site; the sequence is NFSH. Residues R89 and K174 each contribute to the ATP site. E240 serves as a coordination point for Mg(2+). Substrate contacts are provided by G263, D264, and T296. Residue D264 coordinates Mg(2+).

This sequence belongs to the pyruvate kinase family. In terms of assembly, homotetramer. Mg(2+) is required as a cofactor. Requires K(+) as cofactor.

It localises to the cytoplasm. It catalyses the reaction pyruvate + ATP = phosphoenolpyruvate + ADP + H(+). It participates in carbohydrate degradation; glycolysis; pyruvate from D-glyceraldehyde 3-phosphate: step 5/5. This is Pyruvate kinase, cytosolic isozyme from Nicotiana tabacum (Common tobacco).